The primary structure comprises 199 residues: Chaperone protein TorD (199 aa).

This sequence belongs to the TorD/DmsD family. TorD subfamily.

The protein localises to the cytoplasm. In terms of biological role, involved in the biogenesis of TorA. Acts on TorA before the insertion of the molybdenum cofactor and, as a result, probably favors a conformation of the apoenzyme that is competent for acquiring the cofactor. This is Chaperone protein TorD from Escherichia coli O157:H7 (strain EC4115 / EHEC).